A 430-amino-acid polypeptide reads, in one-letter code: Enolase (430 aa).

Gln-164 provides a ligand contact to (2R)-2-phosphoglycerate. Glu-208 (proton donor) is an active-site residue. Asp-245, Glu-288, and Asp-315 together coordinate Mg(2+). Residues Lys-340, Arg-369, Ser-370, and Lys-391 each contribute to the (2R)-2-phosphoglycerate site. Lys-340 acts as the Proton acceptor in catalysis.

This sequence belongs to the enolase family. Mg(2+) is required as a cofactor.

Its subcellular location is the cytoplasm. The protein localises to the secreted. It localises to the cell surface. It carries out the reaction (2R)-2-phosphoglycerate = phosphoenolpyruvate + H2O. It participates in carbohydrate degradation; glycolysis; pyruvate from D-glyceraldehyde 3-phosphate: step 4/5. Its function is as follows. Catalyzes the reversible conversion of 2-phosphoglycerate (2-PG) into phosphoenolpyruvate (PEP). It is essential for the degradation of carbohydrates via glycolysis. The polypeptide is Enolase (Thermococcus kodakarensis (strain ATCC BAA-918 / JCM 12380 / KOD1) (Pyrococcus kodakaraensis (strain KOD1))).